The following is a 630-amino-acid chain: Sodium-dependent serotonin transporter (630 aa).

2 stretches are compositionally biased toward polar residues: residues 1–11 (METTPLNSQKV) and 42–55 (QISN…STSA). Positions 1 to 63 (METTPLNSQK…SAGDEAPHST (63 aa)) are disordered. The Cytoplasmic portion of the chain corresponds to 1–87 (METTPLNSQK…ERETWGKKMD (87 aa)). Tyr-47 bears the Phosphotyrosine mark. Residues 88-112 (FLLSVIGYAVDLGNIWRFPYICYQN) traverse the membrane as a helical segment. Na(+) contacts are provided by Gly-94, Ala-96, Val-97, Asp-98, and Asn-101. Asp-98 contacts serotonin. Over 113 to 115 (GGG) the chain is Extracellular. The chain crosses the membrane as a helical span at residues 116–135 (AFLLPYTIMAIFGGIPLFYM). Over 136-160 (ELALGQYHRNGCISIWKKICPIFKG) the chain is Cytoplasmic. Tyr-142 is modified (phosphotyrosine). Residues 161-186 (IGYAICIIAFYIASYYNTIIAWALYY) form a helical membrane-spanning segment. Residues 187 to 252 (LISSFTDQLP…KGLQDLGTIS (66 aa)) lie on the Extracellular side of the membrane. A disulfide bond links Cys-200 and Cys-209. 2 N-linked (GlcNAc...) asparagine glycosylation sites follow: Asn-208 and Asn-217. Residues 253 to 271 (WQLALCIMLIFTIIYFSIW) form a helical membrane-spanning segment. Residues 272 to 277 (KGVKTS) are Cytoplasmic-facing. At Thr-276 the chain carries Phosphothreonine. Residues 278-297 (GKVVWVTATFPYIVLSVLLV) form a helical membrane-spanning segment. Residues 298–324 (RGATLPGAWRGVVFYLKPNWQKLLETG) lie on the Extracellular side of the membrane. The chain crosses the membrane as a helical span at residues 325–347 (VWVDAAAQIFFSLGPGFGVLLAF). Ser-336 lines the Na(+) pocket. Topologically, residues 348 to 360 (ASYNKFNNNCYQD) are cytoplasmic. A helical transmembrane segment spans residues 361-380 (ALVTSVVNCMTSFVSGFVIF). Asn-368 is a Na(+) binding site. At 381 to 421 (TVLGYMAEMRNEDVSEVAKDAGPSLLFITYAEAIANMPAST) the chain is on the extracellular side. Residues 422-443 (FFAIIFFLMLITLGLDSTFAGL) traverse the membrane as a helical segment. Residues Leu-434, Asp-437, and Ser-438 each contribute to the Na(+) site. Thr-439 provides a ligand contact to serotonin. The Cytoplasmic portion of the chain corresponds to 444 to 463 (EGVITAVLDEFPHIWAKRRE). Residues 464–483 (WFVLIVVITCILGSLLTLTS) traverse the membrane as a helical segment. At 484 to 494 (GGAYVVTLLEE) the chain is on the extracellular side. Serotonin is bound by residues Glu-494 and Tyr-495. A helical membrane pass occupies residues 495–516 (YATGPAVLTVALIEAVVVSWFY). Residues 517 to 538 (GITQFCSDVKEMLGFSPGWFWR) are Cytoplasmic-facing. A helical transmembrane segment spans residues 539–558 (ICWVAISPLFLLFIICSFLM). Residues Phe-556 and Ser-559 each coordinate serotonin. The Extracellular segment spans residues 559 to 574 (SPPQLRLFQYNYPHWS). Residues 575–595 (IILGYCIGTSSVICIPIYIIY) traverse the membrane as a helical segment. Residues 596 to 630 (RLISTPGTLKERIIKSITPETPTEIPCGDIRMNAV) lie on the Cytoplasmic side of the membrane. The interaction with RAB4A stretch occupies residues 616–624 (TPTEIPCGD).

The protein belongs to the sodium:neurotransmitter symporter (SNF) (TC 2.A.22) family. SLC6A4 subfamily. Monomer or homooligomer. Interacts (via C-terminus) with SCAMP2; the interaction is direct and retains transporter molecules intracellularly. Interacts with filamentous actin and STX1A. Interacts (via the N-terminus) with STX1A (via the H3 domain); this interaction regulates SLC4A6 channel conductance. Interacts with SEC23A, SEC24C and PATJ. Interacts with NOS1; the interaction may diminish the cell surface localization of SERT in the brain and, correspondingly, reduce serotonin reuptake. Interacts with TGFB1I1. Interacts with ITGAV:ITGB3. Interacts (via C-terminus) with ITGB3; this interaction regulates SLC6A4 trafficking. In terms of processing, phosphorylation at Thr-276 increases 5-HT uptake and is required for cGMP-mediated SERT regulation. Expressed in the lung, midbrain and brainstem regions. Expressed in brainstem raphe neurons.

It localises to the cell membrane. The protein resides in the endomembrane system. It is found in the endosome membrane. Its subcellular location is the synapse. The protein localises to the cell junction. It localises to the focal adhesion. The protein resides in the cell projection. It is found in the neuron projection. It carries out the reaction serotonin(out) + K(+)(in) + Na(+)(out) + H(+)(in) = serotonin(in) + K(+)(out) + Na(+)(in) + H(+)(out). Serotonin transporter that cotransports serotonin with one Na(+) ion in exchange for one K(+) ion and possibly one proton in an overall electroneutral transport cycle. Transports serotonin across the plasma membrane from the extracellular compartment to the cytosol thus limiting serotonin intercellular signaling. Essential for serotonin homeostasis in the central nervous system. In the developing somatosensory cortex, acts in glutamatergic neurons to control serotonin uptake and its trophic functions accounting for proper spatial organization of cortical neurons and elaboration of sensory circuits. In the mature cortex, acts primarily in brainstem raphe neurons to mediate serotonin uptake from the synaptic cleft back into the pre-synaptic terminal thus terminating serotonin signaling at the synapse. Modulates mucosal serotonin levels in the gastrointestinal tract through uptake and clearance of serotonin in enterocytes. Required for enteric neurogenesis and gastrointestinal reflexes. Regulates blood serotonin levels by ensuring rapid high affinity uptake of serotonin from plasma to platelets, where it is further stored in dense granules via vesicular monoamine transporters and then released upon stimulation. Mechanistically, the transport cycle starts with an outward-open conformation having Na1(+) and Cl(-) sites occupied. The binding of a second extracellular Na2(+) ion and serotonin substrate leads to structural changes to outward-occluded to inward-occluded to inward-open, where the Na2(+) ion and serotonin are released into the cytosol. Binding of intracellular K(+) ion induces conformational transitions to inward-occluded to outward-open and completes the cycle by releasing K(+) possibly together with a proton bound to Asp-98 into the extracellular compartment. Na1(+) and Cl(-) ions remain bound throughout the transport cycle. Additionally, displays serotonin-induced channel-like conductance for monovalent cations, mainly Na(+) ions. The channel activity is uncoupled from the transport cycle and may contribute to the membrane resting potential or excitability. In Mus musculus (Mouse), this protein is Sodium-dependent serotonin transporter.